Here is a 212-residue protein sequence, read N- to C-terminus: Ribonuclease HII (212 aa).

An RNase H type-2 domain is found at 28-212 (SLIAGIDEVG…KSFAPVRQVF (185 aa)). D34, E35, and D127 together coordinate a divalent metal cation.

This sequence belongs to the RNase HII family. Mn(2+) is required as a cofactor. The cofactor is Mg(2+).

It is found in the cytoplasm. It carries out the reaction Endonucleolytic cleavage to 5'-phosphomonoester.. Endonuclease that specifically degrades the RNA of RNA-DNA hybrids. This is Ribonuclease HII from Chlamydia abortus (strain DSM 27085 / S26/3) (Chlamydophila abortus).